We begin with the raw amino-acid sequence, 152 residues long: Deoxyuridine 5'-triphosphate nucleotidohydrolase (152 aa).

Substrate contacts are provided by residues 72 to 74 (RSG), N85, and 89 to 91 (TID).

The protein belongs to the dUTPase family. Mg(2+) serves as cofactor.

The catalysed reaction is dUTP + H2O = dUMP + diphosphate + H(+). The protein operates within pyrimidine metabolism; dUMP biosynthesis; dUMP from dCTP (dUTP route): step 2/2. This enzyme is involved in nucleotide metabolism: it produces dUMP, the immediate precursor of thymidine nucleotides and it decreases the intracellular concentration of dUTP so that uracil cannot be incorporated into DNA. In Rhodopseudomonas palustris (strain ATCC BAA-98 / CGA009), this protein is Deoxyuridine 5'-triphosphate nucleotidohydrolase.